A 342-amino-acid chain; its full sequence is DNA primase small subunit PriS (342 aa).

Active-site residues include Asp-97, Asp-99, and Asp-236.

It belongs to the eukaryotic-type primase small subunit family. In terms of assembly, heterodimer of a small subunit (PriS) and a large subunit (PriL). The cofactor is Mg(2+). It depends on Mn(2+) as a cofactor.

Functionally, catalytic subunit of DNA primase, an RNA polymerase that catalyzes the synthesis of short RNA molecules used as primers for DNA polymerase during DNA replication. The small subunit contains the primase catalytic core and has DNA synthesis activity on its own. Binding to the large subunit stabilizes and modulates the activity, increasing the rate of DNA synthesis while decreasing the length of the DNA fragments, and conferring RNA synthesis capability. The DNA polymerase activity may enable DNA primase to also catalyze primer extension after primer synthesis. May also play a role in DNA repair. The sequence is that of DNA primase small subunit PriS from Aeropyrum pernix (strain ATCC 700893 / DSM 11879 / JCM 9820 / NBRC 100138 / K1).